The primary structure comprises 389 residues: Large envelope protein (389 aa).

An N-acetylmethionine modification is found at methionine 1. Glycine 2 carries the N-myristoyl glycine; by host lipid modification. The interval 2–108 (GQNLSTSNPL…PPLRDAHPQA (107 aa)) is pre-S1. A pre-S region spans residues 2-163 (GQNLSTSNPL…FSKIGDLAPN (162 aa)). At 2 to 170 (GQNLSTSNPL…APNMENITSG (169 aa)) the chain is on the virion surface; in external conformation side. Topologically, residues 2–242 (GQNLSTSNPL…PGYRWMCLRR (241 aa)) are intravirion; in internal conformation. The interval 76–103 (TLPANPPPAATNRQSGRQPTPLSPPLRD) is disordered. Positions 86 to 95 (TNRQSGRQPT) are enriched in polar residues. A pre-S2 region spans residues 109–163 (MQWTSTTFHQALQDPRVRGLYFPAGGSSSGTVNPVPTTASPILSIFSKIGDLAPN). Residues 171–191 (FLGPLLVLQAGFFLLTRILTI) form a helical membrane-spanning segment. The Intravirion; in external conformation portion of the chain corresponds to 192-242 (PQSLDSWWTSLNFLGGTTVCLGQNSQSPTSNHSPTSCPPTCPGYRWMCLRR). Residues 243–263 (FIIFLFILLLCLIFLLVLLDY) traverse the membrane as a helical segment. The Virion surface portion of the chain corresponds to 264–337 (QGMLPVCPLI…WASARFSWLS (74 aa)). A glycan (N-linked (GlcNAc...) asparagine; by host) is linked at asparagine 309. A helical membrane pass occupies residues 338–358 (LLVPFVQWFAGLSPIVWLSVI). The Intravirion segment spans residues 359-364 (WMMWYW). The helical transmembrane segment at 365–387 (GPSLYSILSPFLPLLPIFFCLWA) threads the bilayer. Residues 388–389 (YI) lie on the Virion surface side of the membrane.

The protein belongs to the orthohepadnavirus major surface antigen family. As to quaternary structure, in its internal form (Li-HBsAg), interacts with the capsid protein and with the isoform S. Interacts with host chaperone CANX. In terms of assembly, associates with host chaperone CANX through its pre-S2 N glycan; this association may be essential for isoform M proper secretion. Interacts with isoform L. Interacts with the antigens of satellite virus HDV (HDVAgs); this interaction is required for encapsidation of HDV genomic RNA. In terms of processing, isoform M is N-terminally acetylated by host at a ratio of 90%, and N-glycosylated by host at the pre-S2 region. Myristoylated.

The protein resides in the virion membrane. The large envelope protein exists in two topological conformations, one which is termed 'external' or Le-HBsAg and the other 'internal' or Li-HBsAg. In its external conformation the protein attaches the virus to cell receptors and thereby initiating infection. This interaction determines the species specificity and liver tropism. This attachment induces virion internalization predominantly through caveolin-mediated endocytosis. The large envelope protein also assures fusion between virion membrane and endosomal membrane. In its internal conformation the protein plays a role in virion morphogenesis and mediates the contact with the nucleocapsid like a matrix protein. In terms of biological role, the middle envelope protein plays an important role in the budding of the virion. It is involved in the induction of budding in a nucleocapsid independent way. In this process the majority of envelope proteins bud to form subviral lipoprotein particles of 22 nm of diameter that do not contain a nucleocapsid. The protein is Large envelope protein of Homo sapiens (Human).